Reading from the N-terminus, the 162-residue chain is NAD(P)H-quinone oxidoreductase subunit N (162 aa).

It belongs to the complex I NdhN subunit family. NDH-1 can be composed of about 15 different subunits; different subcomplexes with different compositions have been identified which probably have different functions.

It localises to the cellular thylakoid membrane. It catalyses the reaction a plastoquinone + NADH + (n+1) H(+)(in) = a plastoquinol + NAD(+) + n H(+)(out). The catalysed reaction is a plastoquinone + NADPH + (n+1) H(+)(in) = a plastoquinol + NADP(+) + n H(+)(out). Its function is as follows. NDH-1 shuttles electrons from an unknown electron donor, via FMN and iron-sulfur (Fe-S) centers, to quinones in the respiratory and/or the photosynthetic chain. The immediate electron acceptor for the enzyme in this species is believed to be plastoquinone. Couples the redox reaction to proton translocation, and thus conserves the redox energy in a proton gradient. Cyanobacterial NDH-1 also plays a role in inorganic carbon-concentration. In Trichormus variabilis (strain ATCC 29413 / PCC 7937) (Anabaena variabilis), this protein is NAD(P)H-quinone oxidoreductase subunit N.